The sequence spans 189 residues: GTP cyclohydrolase 1 (189 aa).

3 residues coordinate Zn(2+): Cys78, His81, and Cys150.

It belongs to the GTP cyclohydrolase I family. As to quaternary structure, homomer.

The catalysed reaction is GTP + H2O = 7,8-dihydroneopterin 3'-triphosphate + formate + H(+). It participates in cofactor biosynthesis; 7,8-dihydroneopterin triphosphate biosynthesis; 7,8-dihydroneopterin triphosphate from GTP: step 1/1. The protein is GTP cyclohydrolase 1 of Lysinibacillus sphaericus (strain C3-41).